A 503-amino-acid polypeptide reads, in one-letter code: Lysine--tRNA ligase (503 aa).

Residues 23–31 (PSGPIHVGN) carry the 'HIGH' region motif. The 'KMSKS' region motif lies at 267 to 271 (AMHSS).

The protein belongs to the class-I aminoacyl-tRNA synthetase family.

Its subcellular location is the cytoplasm. The enzyme catalyses tRNA(Lys) + L-lysine + ATP = L-lysyl-tRNA(Lys) + AMP + diphosphate. This is Lysine--tRNA ligase from Thermoplasma volcanium (strain ATCC 51530 / DSM 4299 / JCM 9571 / NBRC 15438 / GSS1).